The following is a 359-amino-acid chain: Peptide chain release factor 1 (359 aa).

Residue Gln236 is modified to N5-methylglutamine.

Belongs to the prokaryotic/mitochondrial release factor family. Methylated by PrmC. Methylation increases the termination efficiency of RF1.

Its subcellular location is the cytoplasm. Functionally, peptide chain release factor 1 directs the termination of translation in response to the peptide chain termination codons UAG and UAA. In Streptococcus agalactiae serotype Ia (strain ATCC 27591 / A909 / CDC SS700), this protein is Peptide chain release factor 1.